The primary structure comprises 55 residues: Large ribosomal subunit protein bL33 (55 aa).

This sequence belongs to the bacterial ribosomal protein bL33 family.

In Maricaulis maris (strain MCS10) (Caulobacter maris), this protein is Large ribosomal subunit protein bL33.